A 400-amino-acid polypeptide reads, in one-letter code: Cytohesin-3 (400 aa).

The stretch at 14-61 (EDLSLEEREELLDIRRRKKELIDDIERLKYEIAEVMTEIDNLTSVEES) forms a coiled coil. The region spanning 77–206 (FNMDPKKGIQ…IIMLNTSLHN (130 aa)) is the SEC7 domain. The PH domain maps to 264 to 381 (NPDREGWLLK…WMKSIKASIS (118 aa)). Residues 273-281 (KLGGGRVKT), R285, Y296, R306, and N355 each bind a 1,2-diacyl-sn-glycero-3-phospho-(1D-myo-inositol-3,4,5-trisphosphate). Positions 392-400 (RKRRIANKK) are C-terminal autoinhibitory region.

Interacts with TAMALIN. Interacts with ARF6. Interacts with FRMD4A. Interacts with FRMD4B. In terms of tissue distribution, almost absent from liver, thymus and peripheral blood lymphocytes.

It is found in the cytoplasm. The protein resides in the cytosol. Its subcellular location is the cell membrane. The protein localises to the cell junction. It localises to the adherens junction. It is found in the tight junction. Functionally, promotes guanine-nucleotide exchange on ARF1 and ARF6. Promotes the activation of ARF factors through replacement of GDP with GTP. Plays a role in the epithelial polarization. The polypeptide is Cytohesin-3 (Homo sapiens (Human)).